Consider the following 204-residue polypeptide: Transcription factor bHLH120 (204 aa).

Disordered stretches follow at residues 1–27 (MNPS…KKEK) and 93–116 (KREI…RSEP). One can recognise a bHLH domain in the interval 26 to 78 (EKKLLHRNIERQRRQEMAILFASLRSQLPLKYIKGKRAMSDHVNGAVSFIKDT).

As to quaternary structure, homodimer.

It localises to the nucleus. This chain is Transcription factor bHLH120 (BHLH120), found in Arabidopsis thaliana (Mouse-ear cress).